We begin with the raw amino-acid sequence, 229 residues long: Cytochrome c oxidase subunit 2 (229 aa).

Residues 1–26 (MATWMNINLQDANSSTMEQLTMFHDH) are Mitochondrial intermembrane-facing. The helical transmembrane segment at 27–48 (TLMILTMITSIVTFIMVSMTTN) threads the bilayer. Over 49–62 (TLINRYLLEGQTIE) the chain is Mitochondrial matrix. A helical transmembrane segment spans residues 63–82 (FIWTTIPAITLIFIALPSLH). The Mitochondrial intermembrane portion of the chain corresponds to 83–229 (LLYLIDEINN…LKWINKSLSS (147 aa)). Positions 161, 196, 198, 200, 204, and 207 each coordinate Cu cation. Residue Glu-198 coordinates Mg(2+).

It belongs to the cytochrome c oxidase subunit 2 family. In terms of assembly, component of the cytochrome c oxidase (complex IV, CIV), a multisubunit enzyme composed of a catalytic core of 3 subunits and several supernumerary subunits. The complex exists as a monomer or a dimer and forms supercomplexes (SCs) in the inner mitochondrial membrane with ubiquinol-cytochrome c oxidoreductase (cytochrome b-c1 complex, complex III, CIII). Requires Cu cation as cofactor.

It localises to the mitochondrion inner membrane. It catalyses the reaction 4 Fe(II)-[cytochrome c] + O2 + 8 H(+)(in) = 4 Fe(III)-[cytochrome c] + 2 H2O + 4 H(+)(out). In terms of biological role, component of the cytochrome c oxidase, the last enzyme in the mitochondrial electron transport chain which drives oxidative phosphorylation. The respiratory chain contains 3 multisubunit complexes succinate dehydrogenase (complex II, CII), ubiquinol-cytochrome c oxidoreductase (cytochrome b-c1 complex, complex III, CIII) and cytochrome c oxidase (complex IV, CIV), that cooperate to transfer electrons derived from NADH and succinate to molecular oxygen, creating an electrochemical gradient over the inner membrane that drives transmembrane transport and the ATP synthase. Cytochrome c oxidase is the component of the respiratory chain that catalyzes the reduction of oxygen to water. Electrons originating from reduced cytochrome c in the intermembrane space (IMS) are transferred via the dinuclear copper A center (CU(A)) of subunit 2 and heme A of subunit 1 to the active site in subunit 1, a binuclear center (BNC) formed by heme A3 and copper B (CU(B)). The BNC reduces molecular oxygen to 2 water molecules using 4 electrons from cytochrome c in the IMS and 4 protons from the mitochondrial matrix. This Oncopeltus fasciatus (Large milkweed bug) protein is Cytochrome c oxidase subunit 2 (COII).